Consider the following 143-residue polypeptide: Nucleoside diphosphate kinase (143 aa).

Residues lysine 11, phenylalanine 59, arginine 87, threonine 93, arginine 104, and asparagine 114 each coordinate ATP. Histidine 117 serves as the catalytic Pros-phosphohistidine intermediate.

Belongs to the NDK family. As to quaternary structure, homotetramer. Mg(2+) is required as a cofactor.

The protein localises to the cytoplasm. The enzyme catalyses a 2'-deoxyribonucleoside 5'-diphosphate + ATP = a 2'-deoxyribonucleoside 5'-triphosphate + ADP. The catalysed reaction is a ribonucleoside 5'-diphosphate + ATP = a ribonucleoside 5'-triphosphate + ADP. Major role in the synthesis of nucleoside triphosphates other than ATP. The ATP gamma phosphate is transferred to the NDP beta phosphate via a ping-pong mechanism, using a phosphorylated active-site intermediate. This chain is Nucleoside diphosphate kinase, found in Shewanella sediminis (strain HAW-EB3).